Here is a 171-residue protein sequence, read N- to C-terminus: Adenine phosphoribosyltransferase (171 aa).

Belongs to the purine/pyrimidine phosphoribosyltransferase family. Homodimer.

It is found in the cytoplasm. The catalysed reaction is AMP + diphosphate = 5-phospho-alpha-D-ribose 1-diphosphate + adenine. It functions in the pathway purine metabolism; AMP biosynthesis via salvage pathway; AMP from adenine: step 1/1. In terms of biological role, catalyzes a salvage reaction resulting in the formation of AMP, that is energically less costly than de novo synthesis. The chain is Adenine phosphoribosyltransferase from Solidesulfovibrio magneticus (strain ATCC 700980 / DSM 13731 / RS-1) (Desulfovibrio magneticus).